Reading from the N-terminus, the 147-residue chain is Large ribosomal subunit protein bL9 (147 aa).

It belongs to the bacterial ribosomal protein bL9 family.

Its function is as follows. Binds to the 23S rRNA. This is Large ribosomal subunit protein bL9 from Clostridium botulinum (strain ATCC 19397 / Type A).